Here is a 196-residue protein sequence, read N- to C-terminus: MPNSIIKKYPSKGKLFYVIGASGVGKDSLLHYARQRLANESLVFAHRYITRPVELKGENHIQLTKEEFNNRLQRGCFKFNWHSHELDYGIGVEVDRWLMQGSNVVINGSRGYLNTAVALHPGLVPVLIQVDSNLLHERLIKRGRETLEQIEKRIQRAQAFVGLTSPNMQIIENNSELSVAGEQLVSLLRNQAVKIL.

Belongs to the ribose 1,5-bisphosphokinase family.

It carries out the reaction alpha-D-ribose 1,5-bisphosphate + ATP = 5-phospho-alpha-D-ribose 1-diphosphate + ADP. The protein operates within metabolic intermediate biosynthesis; 5-phospho-alpha-D-ribose 1-diphosphate biosynthesis; 5-phospho-alpha-D-ribose 1-diphosphate from D-ribose 5-phosphate (route II): step 3/3. Functionally, catalyzes the phosphorylation of ribose 1,5-bisphosphate to 5-phospho-D-ribosyl alpha-1-diphosphate (PRPP). This Psychromonas ingrahamii (strain DSM 17664 / CCUG 51855 / 37) protein is Ribose 1,5-bisphosphate phosphokinase PhnN.